The sequence spans 337 residues: RAD51-associated protein 1 (337 aa).

2 disordered regions span residues 1 to 69 and 88 to 337; these read MVRP…PPKK and LSVK…SQVR. Phosphoserine occurs at positions 19 and 23. Polar residues predominate over residues 28-38; it reads ISSSTPVNKSK. Residues 32-50 form an interaction with DNA region; sequence TPVNKSKTVPKVLKQDKPK. A compositionally biased stretch (basic and acidic residues) spans 44 to 69; it reads LKQDKPKPNLKNLQKEEVLPTEPPKK. Phosphoserine occurs at positions 103 and 107. The segment covering 105-118 has biased composition (basic and acidic residues); sequence EKSTDKQGKEKTEN. Positions 138–143 match the SIM motif motif; sequence LDKITE. Residues 190 to 205 show a composition bias toward acidic residues; sequence SESDPDFDESKESDED. Residues 225–286 form an interaction with DNA region; sequence GEKKERKSKP…PSAESKRPKW (62 aa). Lys251 participates in a covalent cross-link: Glycyl lysine isopeptide (Lys-Gly) (interchain with G-Cter in SUMO; alternate). Lys251 participates in a covalent cross-link: Glycyl lysine isopeptide (Lys-Gly) (interchain with G-Cter in ubiquitin; alternate). The WVPP motif motif lies at 286–289; the sequence is WVPP. Positions 290–304 are enriched in low complexity; it reads AASGSRNSSSNALAG. Positions 295 to 334 are interaction with RAD51; that stretch reads RNSSSNALAGTPAKSPSQSLRLGLSRLAPVKRLHPSATSS. Ser309 bears the Phosphoserine mark.

In terms of assembly, monomer; elongated monodisperse monomer. Interacts (via C-terminal region) with RAD51; the interaction is direct. Interacts (via SIM motif) with WDR48/UAF1; WDR48/UAF1 and RAD51AP1 cooperate together to stimulate RAD51-mediated homologous recombination (HR). Interacts (via WVPP motif) with DMC1; the interaction is direct. Interacts with PALB2. Interacts with RAD52. In terms of processing, sumoylation with SUMO2/3 by NSMCE2/MMS21 promotes stabilization, possibly by preventing ubiquitination. Most abundantly expressed in testis. Also expressed in spleen, thymus and bone marrow. Not detected in heart, kidney or liver.

The protein localises to the chromosome. Its subcellular location is the nucleus. It localises to the telomere. Functionally, structure-specific DNA-binding protein involved in DNA repair by promoting RAD51-mediated homologous recombination. Acts by stimulating D-Loop formation by RAD51: specifically enhances joint molecule formation through its structure-specific DNA interaction and its interaction with RAD51. Binds single-stranded DNA (ssDNA), double-stranded DNA (dsDNA) and secondary DNA structures, such as D-loop structures: has a strong preference for branched-DNA structures that are obligatory intermediates during joint molecule formation. Cooperates with WDR48/UAF1 to stimulate RAD51-mediated homologous recombination: both WDR48/UAF1 and RAD51AP1 have coordinated role in DNA-binding during homologous recombination and DNA repair. WDR48/UAF1 and RAD51AP1 also have a coordinated role in DNA-binding to promote USP1-mediated deubiquitination of FANCD2. Also involved in meiosis by promoting DMC1-mediated homologous meiotic recombination. The chain is RAD51-associated protein 1 from Mus musculus (Mouse).